The chain runs to 273 residues: Dermonecrotic toxin LruSicTox-alphaIC1d (273 aa).

The active site involves His-5. Residues Glu-25 and Asp-27 each coordinate Mg(2+). The active-site Nucleophile is His-41. 2 cysteine pairs are disulfide-bonded: Cys-45–Cys-51 and Cys-47–Cys-190. Asp-85 is a binding site for Mg(2+).

It belongs to the arthropod phospholipase D family. Class II subfamily. Mg(2+) serves as cofactor. In terms of tissue distribution, expressed by the venom gland.

The protein localises to the secreted. The enzyme catalyses an N-(acyl)-sphingosylphosphocholine = an N-(acyl)-sphingosyl-1,3-cyclic phosphate + choline. It carries out the reaction an N-(acyl)-sphingosylphosphoethanolamine = an N-(acyl)-sphingosyl-1,3-cyclic phosphate + ethanolamine. It catalyses the reaction a 1-acyl-sn-glycero-3-phosphocholine = a 1-acyl-sn-glycero-2,3-cyclic phosphate + choline. The catalysed reaction is a 1-acyl-sn-glycero-3-phosphoethanolamine = a 1-acyl-sn-glycero-2,3-cyclic phosphate + ethanolamine. Dermonecrotic toxins cleave the phosphodiester linkage between the phosphate and headgroup of certain phospholipids (sphingolipid and lysolipid substrates), forming an alcohol (often choline) and a cyclic phosphate. This toxin acts on sphingomyelin (SM). It may also act on ceramide phosphoethanolamine (CPE), lysophosphatidylcholine (LPC) and lysophosphatidylethanolamine (LPE), but not on lysophosphatidylserine (LPS), and lysophosphatidylglycerol (LPG). It acts by transphosphatidylation, releasing exclusively cyclic phosphate products as second products. Induces dermonecrosis, hemolysis, increased vascular permeability, edema, inflammatory response, and platelet aggregation. The sequence is that of Dermonecrotic toxin LruSicTox-alphaIC1d from Loxosceles rufescens (Mediterranean recluse spider).